The following is a 484-amino-acid chain: Glycogen synthase (484 aa).

Lys-21 contributes to the ADP-alpha-D-glucose binding site.

The protein belongs to the glycosyltransferase 1 family. Bacterial/plant glycogen synthase subfamily.

The enzyme catalyses [(1-&gt;4)-alpha-D-glucosyl](n) + ADP-alpha-D-glucose = [(1-&gt;4)-alpha-D-glucosyl](n+1) + ADP + H(+). It functions in the pathway glycan biosynthesis; glycogen biosynthesis. In terms of biological role, synthesizes alpha-1,4-glucan chains using ADP-glucose. The chain is Glycogen synthase from Pseudomonas syringae pv. tomato (strain ATCC BAA-871 / DC3000).